A 37-amino-acid polypeptide reads, in one-letter code: Large ribosomal subunit protein bL36 (37 aa).

It belongs to the bacterial ribosomal protein bL36 family.

In Polaromonas naphthalenivorans (strain CJ2), this protein is Large ribosomal subunit protein bL36.